The primary structure comprises 226 residues: 3-dehydroquinate dehydratase (226 aa).

3-dehydroquinate-binding positions include 30-32 (EWR) and R62. The Proton donor/acceptor role is filled by H118. The active-site Schiff-base intermediate with substrate is K143. Positions 186, 205, and 209 each coordinate 3-dehydroquinate.

The protein belongs to the type-I 3-dehydroquinase family. In terms of assembly, homodimer.

The enzyme catalyses 3-dehydroquinate = 3-dehydroshikimate + H2O. The protein operates within metabolic intermediate biosynthesis; chorismate biosynthesis; chorismate from D-erythrose 4-phosphate and phosphoenolpyruvate: step 3/7. Functionally, involved in the third step of the chorismate pathway, which leads to the biosynthesis of aromatic amino acids. Catalyzes the cis-dehydration of 3-dehydroquinate (DHQ) and introduces the first double bond of the aromatic ring to yield 3-dehydroshikimate. The protein is 3-dehydroquinate dehydratase of Streptococcus equi subsp. zooepidemicus (strain H70).